The chain runs to 92 residues: Signal recognition particle 19 kDa protein (92 aa).

The protein belongs to the SRP19 family. Part of the signal recognition particle protein translocation system, which is composed of SRP and FtsY. Archaeal SRP consists of a 7S RNA molecule of 300 nucleotides and two protein subunits: SRP54 and SRP19.

Its subcellular location is the cytoplasm. Its function is as follows. Involved in targeting and insertion of nascent membrane proteins into the cytoplasmic membrane. Binds directly to 7S RNA and mediates binding of the 54 kDa subunit of the SRP. In Methanosphaera stadtmanae (strain ATCC 43021 / DSM 3091 / JCM 11832 / MCB-3), this protein is Signal recognition particle 19 kDa protein.